The chain runs to 493 residues: 3-octaprenyl-4-hydroxybenzoate carboxy-lyase (493 aa).

Residue asparagine 172 coordinates Mn(2+). Residues 175-177 (IYR), 189-191 (RWL), and 194-195 (RG) contribute to the prenylated FMN site. Glutamate 238 is a Mn(2+) binding site. The active-site Proton donor is aspartate 287.

Belongs to the UbiD family. As to quaternary structure, homohexamer. The cofactor is prenylated FMN. It depends on Mn(2+) as a cofactor.

It localises to the cell membrane. It catalyses the reaction a 4-hydroxy-3-(all-trans-polyprenyl)benzoate + H(+) = a 2-(all-trans-polyprenyl)phenol + CO2. It functions in the pathway cofactor biosynthesis; ubiquinone biosynthesis. Its function is as follows. Catalyzes the decarboxylation of 3-octaprenyl-4-hydroxy benzoate to 2-octaprenylphenol, an intermediate step in ubiquinone biosynthesis. The sequence is that of 3-octaprenyl-4-hydroxybenzoate carboxy-lyase from Shewanella amazonensis (strain ATCC BAA-1098 / SB2B).